Consider the following 546-residue polypeptide: UDP-glycosyltransferase FPY2 (546 aa).

Residues 1–20 form the signal peptide; it reads MSLPKAQILVVVTVGGSTNS. Residues 517–537 form a helical membrane-spanning segment; it reads LNNIDVALLFFILLGIISWIT.

Belongs to the glycosyltransferase 28 family.

Its subcellular location is the membrane. The protein operates within secondary metabolite biosynthesis. Functionally, UDP-glycosyltransferase; part of the gene cluster that mediates the biosynthesis of the gamma-pyrones fusapyrone (FPY) and deoxyfusapyrone (dFPY). FPY is an undecaketide and thus likely synthesized by the polyketide synthase FPY1 from acetyl-CoA functioning as starter unit and the addition of 10 malonyl-CoA extender units by successive Claisen-condensations. Next to this, FPY shares some rare features: C-glycosylated 4-deoxyglucose at C-3, a gem-dimethyl group at C-13, and an alpha-beta to beta-gamma double bond shift at C-20. During FPY biosynthesis mono-C-methyl groups are transferred to the tetra-, penta-, hexa- and heptaketide, while two C-methyl groups are transferred to the nonaketide, suggesting that the CMet domain is programmed to selectively catalyze two successive C-alpha-methylation reactions of the nonaketide, while other alpha-carbons are non- or mono-methylated only. While the origin of the 4'-deoxyglucose moiety remains opaque, its transfer to C-3 is most likely mediated by the C-glycosyltransferase FPY2. Next to this, the hydroxyl group present at C-33 and discriminating between FPY and dFPY, is likely to be installed by the cytochrome P450 monooxygenase FPY7. No putative function can be predicted for the remaining genes FPY3-FPY6. This chain is UDP-glycosyltransferase FPY2, found in Fusarium mangiferae (Mango malformation disease fungus).